A 348-amino-acid chain; its full sequence is Phosphate acyltransferase (348 aa).

It belongs to the PlsX family. Homodimer. Probably interacts with PlsY.

The protein localises to the cytoplasm. It carries out the reaction a fatty acyl-[ACP] + phosphate = an acyl phosphate + holo-[ACP]. It participates in lipid metabolism; phospholipid metabolism. In terms of biological role, catalyzes the reversible formation of acyl-phosphate (acyl-PO(4)) from acyl-[acyl-carrier-protein] (acyl-ACP). This enzyme utilizes acyl-ACP as fatty acyl donor, but not acyl-CoA. This is Phosphate acyltransferase from Francisella philomiragia subsp. philomiragia (strain ATCC 25017 / CCUG 19701 / FSC 153 / O#319-036).